A 395-amino-acid polypeptide reads, in one-letter code: Glyceraldehyde-3-phosphate dehydrogenase, testis-specific (395 aa).

The testis-specific N-terminal extension stretch occupies residues 1–60 (MSKRDIVLTNVTVVQLLRQPCPEPRVEAEPEPPAQPQPQPEPIKEEVPPPPPPPPAPKKV). Positions 19-59 (QPCPEPRVEAEPEPPAQPQPQPEPIKEEVPPPPPPPPAPKK) are disordered. 2 stretches are compositionally biased toward pro residues: residues 31–41 (EPPAQPQPQPE) and 48–57 (PPPPPPPPAP). NAD(+)-binding positions include 72–73 (RI), Asp-93, and Lys-138. D-glyceraldehyde 3-phosphate is bound by residues 210–212 (SCT), Thr-241, 270–271 (TG), and Arg-293. Cys-211 acts as the Nucleophile in catalysis. Asn-375 is an NAD(+) binding site.

This sequence belongs to the glyceraldehyde-3-phosphate dehydrogenase family. Homotetramer.

It localises to the cytoplasm. It catalyses the reaction D-glyceraldehyde 3-phosphate + phosphate + NAD(+) = (2R)-3-phospho-glyceroyl phosphate + NADH + H(+). The protein operates within carbohydrate degradation; glycolysis; pyruvate from D-glyceraldehyde 3-phosphate: step 1/5. May play an important role in regulating the switch between different pathways for energy production during spermiogenesis and in the spermatozoon. Required for sperm motility and male fertility. This Bos taurus (Bovine) protein is Glyceraldehyde-3-phosphate dehydrogenase, testis-specific (GAPDHS).